A 415-amino-acid polypeptide reads, in one-letter code: Serine--tRNA ligase (415 aa).

231-233 contacts L-serine; it reads TAE. 262 to 264 lines the ATP pocket; the sequence is RSE. L-serine is bound at residue Glu-285. 349–352 is an ATP binding site; sequence EISS. L-serine is bound at residue Ser-383.

The protein belongs to the class-II aminoacyl-tRNA synthetase family. Type-1 seryl-tRNA synthetase subfamily. In terms of assembly, homodimer. The tRNA molecule binds across the dimer.

It is found in the cytoplasm. It catalyses the reaction tRNA(Ser) + L-serine + ATP = L-seryl-tRNA(Ser) + AMP + diphosphate + H(+). The enzyme catalyses tRNA(Sec) + L-serine + ATP = L-seryl-tRNA(Sec) + AMP + diphosphate + H(+). The protein operates within aminoacyl-tRNA biosynthesis; selenocysteinyl-tRNA(Sec) biosynthesis; L-seryl-tRNA(Sec) from L-serine and tRNA(Sec): step 1/1. Catalyzes the attachment of serine to tRNA(Ser). Is also able to aminoacylate tRNA(Sec) with serine, to form the misacylated tRNA L-seryl-tRNA(Sec), which will be further converted into selenocysteinyl-tRNA(Sec). The polypeptide is Serine--tRNA ligase (Helicobacter pylori (strain HPAG1)).